We begin with the raw amino-acid sequence, 475 residues long: Kynureninase (475 aa).

Pyridoxal 5'-phosphate is bound by residues L141, T142, 169-172, D254, H257, and Y279; that span reads FPSD. Position 280 is an N6-(pyridoxal phosphate)lysine (K280). The pyridoxal 5'-phosphate site is built by W319 and N347.

This sequence belongs to the kynureninase family. As to quaternary structure, homodimer. The cofactor is pyridoxal 5'-phosphate.

Its subcellular location is the cytoplasm. It carries out the reaction L-kynurenine + H2O = anthranilate + L-alanine + H(+). It catalyses the reaction 3-hydroxy-L-kynurenine + H2O = 3-hydroxyanthranilate + L-alanine + H(+). It participates in amino-acid degradation; L-kynurenine degradation; L-alanine and anthranilate from L-kynurenine: step 1/1. The protein operates within cofactor biosynthesis; NAD(+) biosynthesis; quinolinate from L-kynurenine: step 2/3. In terms of biological role, catalyzes the cleavage of L-kynurenine (L-Kyn) and L-3-hydroxykynurenine (L-3OHKyn) into anthranilic acid (AA) and 3-hydroxyanthranilic acid (3-OHAA), respectively. The sequence is that of Kynureninase (bna5) from Sclerotinia sclerotiorum (strain ATCC 18683 / 1980 / Ss-1) (White mold).